Here is a 439-residue protein sequence, read N- to C-terminus: MTPILTVLICLGLSLDPRTHVQAGPLPKPTLWAEPGSVITQGSPVTLRCQGSLETQEYHLYREKKTALWITRIPQELVKKGQFPILSITWEHAGRYCCIYGSHTAGLSESSDPLELVVTGAYSKPTLSALPSPVVTSGGNVTIQCDSQVAFDGFILCKEGEDEHPQCLNSHSHARGSSRAIFSVGPVSPSRRWSYRCYGYDSRAPYVWSLPSDLLGLLVPGVSKKPSLSVQPGPVVAPGEKLTFQCGSDAGYDRFVLYKEWGRDFLQRPGRQPQAGLSQANFTLGPVSRSYGGQYTCSGAYNLSSEWSAPSDPLDILITGQIRARPFLSVRPGPTVASGENVTLLCQSQGGMHTFLLTKEGAADSPLRLKSKRQSHKYQAEFPMSPVTSAHAGTYRCYGSLSSNPYLLTHPSDPLELVVSGAAETLSPPQNKSDSKAGE.

The N-terminal stretch at 1–23 (MTPILTVLICLGLSLDPRTHVQA) is a signal peptide. Ig-like C2-type domains follow at residues 27–108 (PKPT…AGLS), 119–224 (TGAY…GVSK), 226–315 (PSLS…DPLD), and 326–415 (PFLS…SDPL). A disulfide bridge connects residues Cys49 and Cys98. N-linked (GlcNAc...) asparagine glycosylation is present at Asn140. Disulfide bonds link Cys145–Cys197, Cys157–Cys167, and Cys246–Cys297. Asn281, Asn302, and Asn341 each carry an N-linked (GlcNAc...) asparagine glycan. A disulfide bridge links Cys346 with Cys397. A glycan (N-linked (GlcNAc...) asparagine) is linked at Asn431.

N-glycosylation is required for ligand binding. In terms of tissue distribution, detected in B-cells, and at lower levels in natural killer (NK) cells. Detected in peripheral blood monocytes and lung.

The protein resides in the secreted. Acts as a soluble receptor for class I MHC antigens. Binds both classical and non-classical HLA class I molecules but with reduced affinities compared to LILRB1 or LILRB2. Binds with high affinity to the surface of monocytes, leading to abolish LPS-induced TNF-alpha production by monocytes. The chain is Leukocyte immunoglobulin-like receptor subfamily A member 3 (LILRA3) from Homo sapiens (Human).